The chain runs to 178 residues: Photosystem I assembly protein Ycf4 (178 aa).

2 consecutive transmembrane segments (helical) span residues 19–39 and 61–81; these read ILVA…SLSS and LIMG…WAVI.

It belongs to the Ycf4 family.

The protein localises to the cellular thylakoid membrane. Its function is as follows. Seems to be required for the assembly of the photosystem I complex. The chain is Photosystem I assembly protein Ycf4 from Synechococcus sp. (strain CC9311).